We begin with the raw amino-acid sequence, 86 residues long: MDQVIVKASDMGDEMQQEVFRIAEEAMREHTLEREIASVIKKEMDSRYGHTWHVIVGRSFGSYVTHEKGKFVYFYVGPLALLVFKT.

It belongs to the dynein light chain family. As to quaternary structure, homodimer. Cytoplasmic dynein consists of two catalytic heavy chains (HCs) and a number of non-catalytic subunits which present intermediate chains (ICs), light intermediate chains (LICs) and light chains (LCs). Component of the nuclear pore complex (NPC). NPC constitutes the exclusive means of nucleocytoplasmic transport. NPCs allow the passive diffusion of ions and small molecules and the active, nuclear transport receptor-mediated bidirectional transport of macromolecules such as proteins, RNAs, ribonucleoparticles (RNPs), and ribosomal subunits across the nuclear envelope. Due to its 8-fold rotational symmetry, all subunits are present with 8 copies or multiples thereof.

Its subcellular location is the cytoplasm. It localises to the cytoskeleton. The protein resides in the nucleus. The protein localises to the nuclear pore complex. Functionally, acts as one of several non-catalytic accessory components of the cytoplasmic dynein complex that are thought to be involved in linking dynein to cargos and to adapter proteins that regulate dynein function. Cytoplasmic dynein 1 acts as a motor for the intracellular retrograde motility of vesicles and organelles along microtubules. May play a role in changing or maintaining the spatial distribution of cytoskeletal structures. Also a component of the nuclear pore complex. The chain is Dynein light chain 1, cytoplasmic (DYN2) from Candida glabrata (strain ATCC 2001 / BCRC 20586 / JCM 3761 / NBRC 0622 / NRRL Y-65 / CBS 138) (Yeast).